Reading from the N-terminus, the 258-residue chain is 4-hydroxy-tetrahydrodipicolinate reductase (258 aa).

Residues Gly8–Met13, Gly86–Thr88, and Ala110–Met113 contribute to the NAD(+) site. The active-site Proton donor/acceptor is the His142. His143 contributes to the (S)-2,3,4,5-tetrahydrodipicolinate binding site. The active-site Proton donor is Lys146. Gly152–Thr153 serves as a coordination point for (S)-2,3,4,5-tetrahydrodipicolinate.

It belongs to the DapB family.

The protein localises to the cytoplasm. The enzyme catalyses (S)-2,3,4,5-tetrahydrodipicolinate + NAD(+) + H2O = (2S,4S)-4-hydroxy-2,3,4,5-tetrahydrodipicolinate + NADH + H(+). It carries out the reaction (S)-2,3,4,5-tetrahydrodipicolinate + NADP(+) + H2O = (2S,4S)-4-hydroxy-2,3,4,5-tetrahydrodipicolinate + NADPH + H(+). The protein operates within amino-acid biosynthesis; L-lysine biosynthesis via DAP pathway; (S)-tetrahydrodipicolinate from L-aspartate: step 4/4. Functionally, catalyzes the conversion of 4-hydroxy-tetrahydrodipicolinate (HTPA) to tetrahydrodipicolinate. In Campylobacter hominis (strain ATCC BAA-381 / DSM 21671 / CCUG 45161 / LMG 19568 / NCTC 13146 / CH001A), this protein is 4-hydroxy-tetrahydrodipicolinate reductase.